A 141-amino-acid chain; its full sequence is Histone H2B (141 aa).

The segment covering 1–10 has biased composition (basic and acidic residues); that stretch reads MPPKAAEKKP. The tract at residues 1–49 is disordered; sequence MPPKAAEKKPSTGGKAPAGGKAPAEKKEAGKKTAAAASGDKKKRGKTRK. Lys-8 and Lys-9 each carry N6-acetyllysine; alternate. Glycyl lysine isopeptide (Lys-Gly) (interchain with G-Cter in SUMO); alternate cross-links involve residues Lys-8 and Lys-9. Over residues 11 to 22 the composition is skewed to low complexity; sequence STGGKAPAGGKA. Residue Lys-15 is modified to N6-acetyllysine. Residue Lys-26 is modified to N6-acetyllysine; alternate. Residue Lys-26 forms a Glycyl lysine isopeptide (Lys-Gly) (interchain with G-Cter in SUMO); alternate linkage. Residue Lys-27 forms a Glycyl lysine isopeptide (Lys-Gly) (interchain with G-Cter in SUMO) linkage. Lys-135 is covalently cross-linked (Glycyl lysine isopeptide (Lys-Gly) (interchain with G-Cter in ubiquitin)).

The protein belongs to the histone H2B family. As to quaternary structure, the nucleosome is a histone octamer containing two molecules each of H2A, H2B, H3 and H4 assembled in one H3-H4 heterotetramer and two H2A-H2B heterodimers. The octamer wraps approximately 147 bp of DNA. Monoubiquitinated by the ubc2-bre1 complex to form H2BK123ub1. H2BK123ub1 gives a specific tag for epigenetic transcriptional activation and is also prerequisite for H3K4me and H3K79me formation. H2BK123ub1 also modulates the formation of double-strand breaks during meiosis and is a prerequisite for DNA-damage checkpoint activation. In terms of processing, acetylated by gcn5 to form H2BK11ac and H2BK16ac. H2BK16ac can also be formed by esa1. Acetylation of N-terminal lysines and particularly formation of H2BK11acK16ac has a positive effect on transcription. Post-translationally, sumoylation to form H2BK6su or H2BK7su, and probably also H2BK16su or H2BK17su, occurs preferentially near the telomeres and represses gene transcription.

It localises to the nucleus. The protein localises to the chromosome. Functionally, core component of nucleosome. Nucleosomes wrap and compact DNA into chromatin, limiting DNA accessibility to the cellular machineries which require DNA as a template. Histones thereby play a central role in transcription regulation, DNA repair, DNA replication and chromosomal stability. DNA accessibility is regulated via a complex set of post-translational modifications of histones, also called histone code, and nucleosome remodeling. In Aspergillus niger (strain ATCC MYA-4892 / CBS 513.88 / FGSC A1513), this protein is Histone H2B (htb1).